Reading from the N-terminus, the 59-residue chain is MKARFIWADNYFENTTSSSTPKVGYNVGASLLTAHKRILSYLQRITVIYAANILATKGS.

This is an uncharacterized protein from Rickettsia conorii (strain ATCC VR-613 / Malish 7).